We begin with the raw amino-acid sequence, 188 residues long: Actin-related protein 2/3 complex subunit 3 (188 aa).

This sequence belongs to the ARPC3 family. In terms of assembly, component of the Arp2/3 complex.

It localises to the cytoplasm. It is found in the cytoskeleton. Functions as a component of the Arp2/3 complex which is involved in regulation of actin polymerization and together with an activating nucleation-promoting factor (NPF) mediates the formation of branched actin networks. The chain is Actin-related protein 2/3 complex subunit 3 from Entamoeba histolytica (strain ATCC 30459 / HM-1:IMSS / ABRM).